The following is a 362-amino-acid chain: Thiol protease aleurain (362 aa).

Residues 1–22 form the signal peptide; the sequence is MAHARVLLLALAVLATAAVAVA. The propeptide at 23-143 is activation peptide; the sequence is SSSSFADSNP…GNHLMRDAAA (121 aa). 2 disulfide bridges follow: Cys-165-Cys-208 and Cys-199-Cys-241. Cys-168 is a catalytic residue. Residue Asn-188 is glycosylated (N-linked (GlcNAc...) asparagine). N-linked (GlcNAc...) asparagine glycosylation is present at Asn-257. An intrachain disulfide couples Cys-299 to Cys-349. Catalysis depends on residues His-308 and Asn-328.

Belongs to the peptidase C1 family.

It localises to the vacuole. The enzyme catalyses Hydrolysis of proteins, acting as an aminopeptidase (notably, cleaving Arg-|-Xaa bonds) as well as an endopeptidase.. May play a role in proteolysis leading to mobilization of nitrogen during senescence and starvation. The sequence is that of Thiol protease aleurain from Hordeum vulgare (Barley).